A 149-amino-acid chain; its full sequence is Large ribosomal subunit protein bL17 (149 aa).

This sequence belongs to the bacterial ribosomal protein bL17 family. As to quaternary structure, part of the 50S ribosomal subunit. Contacts protein L32.

This is Large ribosomal subunit protein bL17 from Kosmotoga olearia (strain ATCC BAA-1733 / DSM 21960 / TBF 19.5.1).